Consider the following 676-residue polypeptide: RNA helicase NPH-II (676 aa).

The 176-residue stretch at 172–347 folds into the Helicase ATP-binding domain; that stretch reads FLAWISHRPV…IFLPNPAFIH (176 aa). 185–192 is a binding site for ATP; that stretch reads GGTGVGKT. A DEXH box motif is present at residues 296-299; sequence DEVH. In terms of domain architecture, Helicase C-terminal spans 366 to 535; that stretch reads NPSSRMAYIE…NYILYANKFN (170 aa).

It belongs to the DEAD box helicase family. DEAH subfamily. In terms of assembly, monomer.

The protein localises to the virion. The catalysed reaction is ATP + H2O = ADP + phosphate + H(+). NTP-dependent helicase that catalyzes unidirectional unwinding of 3'tailed duplex RNAs and plays an important role during transcription of early mRNAs, presumably by preventing R-loop formation behind the elongating RNA polymerase. Might also play a role in the export of newly synthesized mRNA chains out of the core into the cytoplasm. Required for replication and propagation of viral particles. The sequence is that of RNA helicase NPH-II (OPG084) from Monkeypox virus.